The following is a 278-amino-acid chain: Probable aquaporin PIP2-8 (278 aa).

At Met1 the chain carries N-acetylmethionine. The Cytoplasmic segment spans residues 1–36 (MSKEVSEEGRHGKDYVDPPPAPLLDMAELKLWSFYR). The residue at position 3 (Lys3) is an N6,N6-dimethyllysine. Residues 37–57 (AIIAEFIATLLFLYVTVATVI) traverse the membrane as a helical segment. The Extracellular portion of the chain corresponds to 58–74 (GHKNQTGPCGGVGLLGI). Residues 75 to 95 (AWAFGGMIFVLVYCTAGISGG) traverse the membrane as a helical segment. The Cytoplasmic portion of the chain corresponds to 96-116 (HINPAVTFGLFLARKVSLPRA). The NPA 1 motif lies at 98 to 100 (NPA). A helical membrane pass occupies residues 117–137 (VAYMVAQCLGAICGVGLVKAF). Over 138–158 (MMTPYKRLGGGANTVADGYST) the chain is Extracellular. Residues 159–179 (GTALGAEIIGTFVLVYTVFSA) traverse the membrane as a helical segment. The Cytoplasmic segment spans residues 180 to 192 (TDPKRSARDSHVP). Residues 193-213 (VLAPLPIGFAVFMVHLATIPI) form a helical membrane-spanning segment. Topologically, residues 214-240 (TGTGINPARSFGAAVIYNNEKAWDDHW) are extracellular. The NPA 2 motif lies at 219–221 (NPA). Residues 241 to 261 (IFWVGPFVGALAAAAYHQYIL) form a helical membrane-spanning segment. Residues 262 to 278 (RAAAIKALASFRSNPTN) are Cytoplasmic-facing. Residues Ser271 and Ser274 each carry the phosphoserine modification.

It belongs to the MIP/aquaporin (TC 1.A.8) family. PIP (TC 1.A.8.11) subfamily. Expressed in roots and floral buds.

Its subcellular location is the cell membrane. In terms of biological role, aquaporins facilitate the transport of water and small neutral solutes across cell membranes. In Arabidopsis thaliana (Mouse-ear cress), this protein is Probable aquaporin PIP2-8 (PIP2-8).